The chain runs to 189 residues: GTPase HRas (189 aa).

M1 carries the post-translational modification N-acetylmethionine. An N-acetylthreonine; in GTPase HRas, N-terminally processed modification is found at T2. 10 to 17 lines the GTP pocket; the sequence is GAGGVGKS. The short motif at 32 to 40 is the Effector region element; sequence YDPTIEDSY. GTP is bound by residues 57–61 and 116–119; these read DTAGQ and NKCD. At C118 the chain carries S-nitrosocysteine. The interval 166-185 is hypervariable region; sequence HKLRKLNPPDESGPGCMNCK. S-palmitoyl cysteine attachment occurs at residues C181 and C184. C186 carries the post-translational modification Cysteine methyl ester. C186 is lipidated: S-farnesyl cysteine. A propeptide spans 187–189 (removed in mature form); that stretch reads VIS.

Belongs to the small GTPase superfamily. Ras family. Palmitoylated by the ZDHHC9-GOLGA7 complex. A continuous cycle of de- and re-palmitoylation regulates rapid exchange between plasma membrane and Golgi.

The protein resides in the cell membrane. It is found in the golgi apparatus membrane. It catalyses the reaction GTP + H2O = GDP + phosphate + H(+). Its activity is regulated as follows. Alternates between an inactive form bound to GDP and an active form bound to GTP. Activated by a guanine nucleotide-exchange factor (GEF) and inactivated by a GTPase-activating protein (GAP). Ras proteins bind GDP/GTP and possess intrinsic GTPase activity. In Gallus gallus (Chicken), this protein is GTPase HRas (HRAS).